The primary structure comprises 308 residues: Mycothiol acetyltransferase (308 aa).

Residues 1–20 form a disordered region; it reads MTSDDTAQPSGARRIETRPD. 2 N-acetyltransferase domains span residues 15–152 and 165–308; these read IETR…RSLT and VTVR…RSET. Residue glutamate 47 participates in 1D-myo-inositol 2-(L-cysteinylamino)-2-deoxy-alpha-D-glucopyranoside binding. Acetyl-CoA is bound at residue 91–93; that stretch reads LVV. Positions 192, 231, and 240 each coordinate 1D-myo-inositol 2-(L-cysteinylamino)-2-deoxy-alpha-D-glucopyranoside. Acetyl-CoA-binding positions include 244–246 and 251–257; these read VGV and QGGGLGK. Position 278 (tyrosine 278) interacts with 1D-myo-inositol 2-(L-cysteinylamino)-2-deoxy-alpha-D-glucopyranoside.

Belongs to the acetyltransferase family. MshD subfamily. As to quaternary structure, monomer.

It carries out the reaction 1D-myo-inositol 2-(L-cysteinylamino)-2-deoxy-alpha-D-glucopyranoside + acetyl-CoA = mycothiol + CoA + H(+). In terms of biological role, catalyzes the transfer of acetyl from acetyl-CoA to desacetylmycothiol (Cys-GlcN-Ins) to form mycothiol. In Streptomyces scabiei (strain 87.22), this protein is Mycothiol acetyltransferase.